A 133-amino-acid polypeptide reads, in one-letter code: Small ribosomal subunit protein uS8 (133 aa).

Belongs to the universal ribosomal protein uS8 family. As to quaternary structure, part of the 30S ribosomal subunit. Contacts proteins S5 and S12.

Functionally, one of the primary rRNA binding proteins, it binds directly to 16S rRNA central domain where it helps coordinate assembly of the platform of the 30S subunit. This is Small ribosomal subunit protein uS8 from Gloeobacter violaceus (strain ATCC 29082 / PCC 7421).